A 222-amino-acid polypeptide reads, in one-letter code: Neurotrophic factor BDNF precursor form (222 aa).

A signal peptide spans 1–4; sequence CMKA. Positions 5-113 are excised as a propeptide; that stretch reads APMKEVSVRG…AANMSMRVRR (109 aa). The N-linked (GlcNAc...) asparagine glycan is linked to asparagine 106. 2 cysteine pairs are disulfide-bonded: cysteine 126/cysteine 193 and cysteine 171/cysteine 222.

It belongs to the NGF-beta family.

It localises to the secreted. Its function is as follows. Promotes the survival of neuronal populations that are all located either in the central nervous system or directly connected to it. This Xenopeltis unicolor (Sunbeam snake) protein is Neurotrophic factor BDNF precursor form (BDNF).